Here is a 370-residue protein sequence, read N- to C-terminus: MASFFARTRRFSLVSLFLLELFTINLIPTTDAQIGICYGMMGNNLPPANEVIALYKANNIKRMRLYDPNQPALNALRDSGIELILGIPNSDLQTLATNQDSARQWVQRNVLNFYPSVKIKYIAVGNEVSPVGGSSWLAQYVLPATQNVYQAIRAQGLHDQIKVTTAIDMTLIGNSFPPSKGSFRSDVRSYLDPFIGYLVYAGAPLLVNVYPYFSHIGNPRDISLPYALFTSPGVMVQDGPNGYQNLFDAMLDSVHAALDNTGIGWVNVVVSESGWPSDGGSATSYDNARIYLDNLIRHVGKGTPRRPWATEAYLFAMFDENQKSPELEKHFGVFYPNKQKKYPFGFGGERRDGEIVEGDFNGTVSLKSDM.

The N-terminal stretch at 1–32 is a signal peptide; that stretch reads MASFFARTRRFSLVSLFLLELFTINLIPTTDA. Glutamine 33 bears the Pyrrolidone carboxylic acid mark. Glutamate 127 serves as the catalytic Proton donor. The active-site Nucleophile is glutamate 272. The propeptide at 348–370 is removed in mature form; the sequence is GERRDGEIVEGDFNGTVSLKSDM. An N-linked (GlcNAc...) asparagine glycan is attached at asparagine 361.

This sequence belongs to the glycosyl hydrolase 17 family. In terms of tissue distribution, constitutively expressed in seedling roots.

It catalyses the reaction Hydrolysis of (1-&gt;3)-beta-D-glucosidic linkages in (1-&gt;3)-beta-D-glucans.. In terms of biological role, implicated in the defense of plants against pathogens. This chain is Glucan endo-1,3-beta-glucosidase, found in Pisum sativum (Garden pea).